The primary structure comprises 349 residues: Ion-translocating oxidoreductase complex subunit D (349 aa).

3 consecutive transmembrane segments (helical) span residues 36-56, 77-99, and 124-144; these read CAFFGWGTLIQVLLAIIVALS, SAMLTAILIGVAIPPLAPWWMIV, and AMAAYVLLLVSFPVQMTSWIA. The residue at position 185 (T185) is an FMN phosphoryl threonine. A run of 5 helical transmembrane segments spans residues 212 to 232, 239 to 259, 265 to 285, 291 to 311, and 315 to 335; these read GTGVGWFWVNLAYLAGGLVLL, WHISTGVLAGLFVASSIGFLL, ASPLFHLFSGATMLAAFFIAT, ATSPRGRLIFGALIGVLVYVI, and GGYPDAFAFAVLLANLCAPFI.

Belongs to the NqrB/RnfD family. The complex is composed of six subunits: RnfA, RnfB, RnfC, RnfD, RnfE and RnfG. The cofactor is FMN.

Its subcellular location is the cell inner membrane. Part of a membrane-bound complex that couples electron transfer with translocation of ions across the membrane. This chain is Ion-translocating oxidoreductase complex subunit D, found in Shewanella sp. (strain MR-4).